Reading from the N-terminus, the 392-residue chain is Probable tRNA sulfurtransferase (392 aa).

The THUMP domain occupies 59-166 (DEIIERVKKV…ECSFVFTKKV (108 aa)). Residues 183–184 (LL), 208–209 (HF), Arg-265, Gly-287, and Gln-296 each bind ATP.

It belongs to the ThiI family.

The protein localises to the cytoplasm. It carries out the reaction [ThiI sulfur-carrier protein]-S-sulfanyl-L-cysteine + a uridine in tRNA + 2 reduced [2Fe-2S]-[ferredoxin] + ATP + H(+) = [ThiI sulfur-carrier protein]-L-cysteine + a 4-thiouridine in tRNA + 2 oxidized [2Fe-2S]-[ferredoxin] + AMP + diphosphate. It catalyses the reaction [ThiS sulfur-carrier protein]-C-terminal Gly-Gly-AMP + S-sulfanyl-L-cysteinyl-[cysteine desulfurase] + AH2 = [ThiS sulfur-carrier protein]-C-terminal-Gly-aminoethanethioate + L-cysteinyl-[cysteine desulfurase] + A + AMP + 2 H(+). Its pathway is cofactor biosynthesis; thiamine diphosphate biosynthesis. In terms of biological role, catalyzes the ATP-dependent transfer of a sulfur to tRNA to produce 4-thiouridine in position 8 of tRNAs, which functions as a near-UV photosensor. Also catalyzes the transfer of sulfur to the sulfur carrier protein ThiS, forming ThiS-thiocarboxylate. This is a step in the synthesis of thiazole, in the thiamine biosynthesis pathway. The sulfur is donated as persulfide by IscS. The chain is Probable tRNA sulfurtransferase from Alkaliphilus metalliredigens (strain QYMF).